Here is a 386-residue protein sequence, read N- to C-terminus: Mannitol-1-phosphate 5-dehydrogenase (386 aa).

Residue 6 to 17 (AIHFGGGNIGRG) coordinates NAD(+). K214 is a catalytic residue.

The protein belongs to the mannitol dehydrogenase family. In terms of assembly, monomer.

It carries out the reaction D-mannitol 1-phosphate + NAD(+) = beta-D-fructose 6-phosphate + NADH + H(+). Its function is as follows. Catalyzes the NAD(H)-dependent interconversion of D-fructose 6-phosphate and D-mannitol 1-phosphate in the mannitol metabolic pathway. Plays a key role in liamocins biosynthesis by providing the mannitol moity that is linked to 3,5-dihydroxydecanoic acid (provided by the HR-PKS PKS1) via ester bond formation catalyzed by the esterase EST1. The protein is Mannitol-1-phosphate 5-dehydrogenase of Aureobasidium melanogenum (Aureobasidium pullulans var. melanogenum).